The following is a 116-amino-acid chain: MGKLFLIGAGGFIGACLRYTVSSQVPRIKNIPAGTLTVNLLGTIVLAFLTFSSEPQSMVYLVNIGILGSFTTFSTFAYETFKLLEEGQNFSFFLNIFLNVALCLVGVSIAYLALSL.

A run of 4 helical transmembrane segments spans residues 1-21, 31-51, 58-78, and 92-112; these read MGKL…RYTV, IPAG…FLTF, MVYL…TFAY, and FFLN…IAYL. Na(+) is bound by residues G68 and T71.

Belongs to the fluoride channel Fluc/FEX (TC 1.A.43) family.

It is found in the cell membrane. It catalyses the reaction fluoride(in) = fluoride(out). Its activity is regulated as follows. Na(+) is not transported, but it plays an essential structural role and its presence is essential for fluoride channel function. Fluoride-specific ion channel. Important for reducing fluoride concentration in the cell, thus reducing its toxicity. This chain is Fluoride-specific ion channel FluC 1, found in Methanosarcina barkeri (strain Fusaro / DSM 804).